Reading from the N-terminus, the 429-residue chain is Glutamyl-tRNA reductase (429 aa).

Substrate-binding positions include 50–53 (TCNR), Ser-108, 113–115 (EPQ), and Gln-119. Cys-51 (nucleophile) is an active-site residue. 188 to 193 (GAGEMI) is an NADP(+) binding site.

Belongs to the glutamyl-tRNA reductase family. In terms of assembly, homodimer.

It catalyses the reaction (S)-4-amino-5-oxopentanoate + tRNA(Glu) + NADP(+) = L-glutamyl-tRNA(Glu) + NADPH + H(+). The protein operates within porphyrin-containing compound metabolism; protoporphyrin-IX biosynthesis; 5-aminolevulinate from L-glutamyl-tRNA(Glu): step 1/2. In terms of biological role, catalyzes the NADPH-dependent reduction of glutamyl-tRNA(Glu) to glutamate 1-semialdehyde (GSA). The polypeptide is Glutamyl-tRNA reductase (Polaromonas naphthalenivorans (strain CJ2)).